A 1470-amino-acid polypeptide reads, in one-letter code: MDPRKPRQDPVNDARFYESLIKPPHLRTPDDIRNVYEQLRQLDTFSNLFIGPLKALCKTARYERHPAQYILFRDGDVARSWYILLSGSVFIENQIYMPYGCFGKRTGQNHRRTHNCLLLQESEMIVIDYPTEPQSNGMSPRTPPRGIHHSGEPVHQKTPRKSAPNMSVDSIAMPPPPVPPRPLRLPQTAAKGPAPLPPRGLPRTYPLDFPVDIPTTSSSSSNTSYNDQHRSQVYLNGLSADEDTLVRVKHRREKSNSVGGQAQNGISTARRLRGRSTASSTTTEGETASNEGADSDEDEGSMPSQESSSGGFMDLRDSVRECLEKEPSERNSEDLAVLLDFMQHMSAFAALPMSIKRQLCLKMVFAVVNDAGTVVLAHNEKLDSWSVIVNGCVEVVKPSGERVEYKLGDSFGAEPTPATQIHIGEMRTMVDDCEFVLVEHRDFCSIMSTIGDHIEKDRDGLTGEVVSEVERRTVGTHCGQVLIKGKPDKLIHHLVDERDHNVDPHYVDDFLLTYRVFIRDPTTIFEKLMLWFADSIYRDKVARLVLLWVNNHFNDFETNDEMWNLLERFEGALERDGMHSQLSLLNIACSVKAKPRQVILTRRKDDKMMMRLVGGQESGNSVYVAEVFPDTSAAREGVKRADEMLEVNQQSAKYLSAKKAEDLLTGSLSLTLMLKNNVLGYKETIGKIEHNKPKNGTSRSGAGIPMVIPVHKTSITGKKSSTTSSKSGMMEKLMTILKSSKEDSMDFTDEAKISSADLRPSRSNPDITSISQYYGPVRSECPEHVLKIYRNDQTFKYLPVYKETSAQNVVQLALQEFNMTAEGSPEWSLCECTVTIDGVIKQRRLPPQMENLAERIALNSRYYLKNNSRSEPLVPDELAPELLKEAQTQLLSLNAQVVAAQLTLQDFSVFSAIEPTEFLDNLFKLDSKYGSPKLEEFEQLFNREMWWVATEICTERHVQKRAKLIKKFIKVARYCRDLRNFNSMFAIMSGLDKPAVRRLHSSWERVSSKYIRMLDEIHQLVDPSRNMSKYRQHLAEVAQEPPVVPIYPVIKKDLTFAHDGNATYSEKLINFEKLRLIAKSIRGVMKLSSAPYEIASMAERSGGVVMDALLHMNSFENSNVATMRKGMSGKQNQPRKKVYEQALMVRKVKSYLEGLHVVDNEMELDSMSYDIEPQVQTAHRGANSSSTANIRRVPSPTPSSLSSQSAGSADQSSRHRLLFNGTGSISSAGGGSKFGVESPQAVQKMLSLVQNSKVKGAPPQITSPSTSARSSLQRNMPRVTGRQATSSAQGPVQLNEETSTVTTYYQSDNGRRQRSGSEGRFDNIPPSTFYLTSDGLTVSPRQSLSVVIPTHPHGHSPTSPRCRSRSPASSGCSSFSTIASIAATSMAAAPSAFVSNPYQHHQTVRGHVIGHRPMPIVTSGSATLPNHVSPRGLPPKSRPTILPGSHTNSSSRMGTIKEATFLTSEQVSRV.

Disordered stretches follow at residues 130–227 (PTEP…SYND) and 250–313 (HRRE…GGFM). The span at 173–183 (MPPPPVPPRPL) shows a compositional bias: pro residues. Composition is skewed to low complexity over residues 184–193 (RLPQTAAKGP) and 215–224 (TTSSSSSNTS). Residues 256-266 (NSVGGQAQNGI) are compositionally biased toward polar residues. Residues 275–292 (RSTASSTTTEGETASNEG) are compositionally biased toward low complexity. 347–463 (AFAALPMSIK…IEKDRDGLTG (117 aa)) contributes to the a nucleoside 3',5'-cyclic phosphate binding site. The region spanning 478–592 (CGQVLIKGKP…SLLNIACSVK (115 aa)) is the N-terminal Ras-GEF domain. Positions 597 to 679 (QVILTRRKDD…LTLMLKNNVL (83 aa)) constitute a PDZ domain. The Ras-associating domain occupies 782–869 (PEHVLKIYRN…SRYYLKNNSR (88 aa)). In terms of domain architecture, Ras-GEF spans 894-1124 (NAQVVAAQLT…FENSNVATMR (231 aa)). Positions 1176-1189 (QTAHRGANSSSTAN) are enriched in polar residues. Disordered regions lie at residues 1176-1213 (QTAH…DQSS), 1253-1326 (KVKG…NIPP), 1347-1370 (VIPT…PASS), and 1422-1455 (ATLP…RMGT). Over residues 1198 to 1211 (PSSLSSQSAGSADQ) the composition is skewed to low complexity. Composition is skewed to polar residues over residues 1260-1274 (QITS…SLQR) and 1282-1308 (RQAT…YQSD). A compositionally biased stretch (basic and acidic residues) spans 1309-1321 (NGRRQRSGSEGRF). Positions 1349–1370 (PTHPHGHSPTSPRCRSRSPASS) are enriched in low complexity.

This sequence belongs to the RAPGEF2 family. In terms of tissue distribution, expressed in hermaphrodite-specific neurons (HSNs), oviduct sheath cells and lateral seam cells.

In terms of biological role, acts as a guanine nucleotide exchange factor for small G protein GTPases like rap-1 and rap-2. Required in the hypodermis, especially in the seam cells, for proper formation of the cuticle. In Caenorhabditis elegans, this protein is Rap guanine nucleotide exchange factor (pxf-1).